The chain runs to 780 residues: Myosin heavy chain kinase C (780 aa).

In terms of domain architecture, Alpha-type protein kinase spans 40-243 (IGDDLKPKWT…VCDFLKLKPI (204 aa)). A disordered region spans residues 310 to 495 (RIRAQQQQKS…MEQTPDRSEF (186 aa)). Residues 337-350 (QQSPSSPTSKPVPQ) show a composition bias toward low complexity. Over residues 353 to 376 (KTPSQSNVVNKSPVSPPKENSNVK) the composition is skewed to polar residues. Positions 380-436 (DNINNNNSSISSNNDNSNNNNNNNDNINNSSNSSSVNSNSSSVSSSSSSSSSSSSSS) are enriched in low complexity. The span at 437 to 450 (TTNAAPISIQVSRN) shows a compositional bias: polar residues. Residues 458 to 488 (IQPSSAAASASSTSSSNVPTPESTSTSSMEQ) are compositionally biased toward low complexity. WD repeat units lie at residues 507-546 (DTVRGLQSECITGDSLRLYSGSNDGQIGVWDAVELKHVTN), 549-589 (AHGK…TIKE), 591-628 (KESNEVNTIFIQDNLLYTGCNDKTVKVWDMRSYECVKT), 631-668 (GHTRAIKSVCAMGNLLFSGSNDQQIYVWNLATGTILTN), 671-708 (GHEGWVKTLYAHNNMLYSGSHDETIRIWDLKTTRCVNT), and 748-780 (NTRSSILCLWRNQNQLFTGSLASNLKVWSWDKM).

This sequence belongs to the protein kinase superfamily. Alpha-type protein kinase family. ALPK subfamily. Interacts with myosin II heavy chain (mhcA). In terms of processing, autophosphorylated in vitro.

The protein localises to the cytoplasm. It localises to the cell cortex. The protein resides in the membrane. It is found in the cleavage furrow. It catalyses the reaction L-threonyl-[myosin heavy-chain] + ATP = O-phospho-L-threonyl-[myosin heavy-chain] + ADP + H(+). Its function is as follows. Phosphorylates threonine at 'Thr-1823', 'Thr-1833' and 'Thr-2029' in the C-terminal tail region of myosin II heavy chain (mhcA). This phosphorylation is critical in actin-activated ATPase activity of the myosin and regulating the assembly and disassembly of myosin II filament. In vitro, catalytic domain phosphorylates mhcA, myelin basic protein, myosin regulatory light chain, casein and caldesmon. Drives the disassembly of myosin II filaments for efficient cytokinesis and recycling of myosin II that occurs during late cytokinesis. Can be activated in vitro by autophosphorylation. The protein is Myosin heavy chain kinase C (mhkC) of Dictyostelium discoideum (Social amoeba).